The sequence spans 173 residues: Putative pre-16S rRNA nuclease (173 aa).

It belongs to the YqgF nuclease family.

It is found in the cytoplasm. Its function is as follows. Could be a nuclease involved in processing of the 5'-end of pre-16S rRNA. In Psychrobacter cryohalolentis (strain ATCC BAA-1226 / DSM 17306 / VKM B-2378 / K5), this protein is Putative pre-16S rRNA nuclease.